The sequence spans 489 residues: 3-octaprenyl-4-hydroxybenzoate carboxy-lyase (489 aa).

Residue N172 coordinates Mn(2+). Residues 175-177 (IYR), 189-191 (RWL), and 194-195 (RG) each bind prenylated FMN. E238 contacts Mn(2+). D287 functions as the Proton donor in the catalytic mechanism.

This sequence belongs to the UbiD family. Homohexamer. Requires prenylated FMN as cofactor. Mn(2+) serves as cofactor.

Its subcellular location is the cell membrane. It catalyses the reaction a 4-hydroxy-3-(all-trans-polyprenyl)benzoate + H(+) = a 2-(all-trans-polyprenyl)phenol + CO2. The protein operates within cofactor biosynthesis; ubiquinone biosynthesis. Its function is as follows. Catalyzes the decarboxylation of 3-octaprenyl-4-hydroxy benzoate to 2-octaprenylphenol, an intermediate step in ubiquinone biosynthesis. This chain is 3-octaprenyl-4-hydroxybenzoate carboxy-lyase, found in Glaesserella parasuis serovar 5 (strain SH0165) (Haemophilus parasuis).